The chain runs to 196 residues: MAEAERIIGMPENPDVDGTDEGGSTAADAAVNAGRGKRKILALLSVAVVAYLLDLGSKMLVVAKLEHQPPIDIIGDWLQFRAIRNPGAAFGIGEAFTVIFTIIATGVIVVIFRIARKLYSLPWAIALGLLLGGALGNLTDRIFRAPGVFEGAVVDFIAPKNSAVFNLADSAIVCGGILIVILSFKGLDPDGTVHKD.

Positions Met1 to Ser24 are disordered. A run of 3 helical transmembrane segments spans residues Ile40–Leu60, Ile92–Phe112, and Leu118–Leu138. Active-site residues include Asp155 and Asp169. A helical membrane pass occupies residues Val164–Phe184.

Belongs to the peptidase A8 family.

It is found in the cell membrane. The enzyme catalyses Release of signal peptides from bacterial membrane prolipoproteins. Hydrolyzes -Xaa-Yaa-Zaa-|-(S,diacylglyceryl)Cys-, in which Xaa is hydrophobic (preferably Leu), and Yaa (Ala or Ser) and Zaa (Gly or Ala) have small, neutral side chains.. The protein operates within protein modification; lipoprotein biosynthesis (signal peptide cleavage). Functionally, this protein specifically catalyzes the removal of signal peptides from prolipoproteins. The chain is Lipoprotein signal peptidase from Streptomyces griseus subsp. griseus (strain JCM 4626 / CBS 651.72 / NBRC 13350 / KCC S-0626 / ISP 5235).